The primary structure comprises 592 residues: Proteasome-associated ATPase (592 aa).

The span at 1–11 shows a compositional bias: acidic residues; sequence MTGYDSSEEAE. The interval 1–24 is disordered; the sequence is MTGYDSSEEAERDSSPADGYRQTP. The stretch at 25 to 99 forms a coiled coil; sequence AQLSAQIRVL…LKEEVDRLAQ (75 aa). ATP is bound at residue 281–286; it reads GCGKTL. The docks into pockets in the proteasome alpha-ring stretch occupies residues 591-592; it reads YL.

This sequence belongs to the AAA ATPase family. As to quaternary structure, homohexamer. Assembles into a hexameric ring structure that caps the 20S proteasome core. Strongly interacts with the prokaryotic ubiquitin-like protein Pup through a hydrophobic interface; the interacting region of ARC lies in its N-terminal coiled-coil domain. There is one Pup binding site per ARC hexamer ring. Upon ATP-binding, the C-terminus of ARC interacts with the alpha-rings of the proteasome core, possibly by binding to the intersubunit pockets.

The protein operates within protein degradation; proteasomal Pup-dependent pathway. In terms of biological role, ATPase which is responsible for recognizing, binding, unfolding and translocation of pupylated proteins into the bacterial 20S proteasome core particle. May be essential for opening the gate of the 20S proteasome via an interaction with its C-terminus, thereby allowing substrate entry and access to the site of proteolysis. Thus, the C-termini of the proteasomal ATPase may function like a 'key in a lock' to induce gate opening and therefore regulate proteolysis. The protein is Proteasome-associated ATPase of Nakamurella multipartita (strain ATCC 700099 / DSM 44233 / CIP 104796 / JCM 9543 / NBRC 105858 / Y-104) (Microsphaera multipartita).